Reading from the N-terminus, the 312-residue chain is Coiled-coil domain-containing protein 42 homolog (312 aa).

Coiled coils occupy residues 34–121 and 172–233; these read RLLE…RLKE and ATHQ…WESQ.

Belongs to the CFAP73 family.

This is Coiled-coil domain-containing protein 42 homolog from Nematostella vectensis (Starlet sea anemone).